We begin with the raw amino-acid sequence, 396 residues long: L-lactate dehydrogenase (396 aa).

Residues 1–380 (MIISAASDYR…SGDSLVQELG (380 aa)) enclose the FMN hydroxy acid dehydrogenase domain. Position 24 (tyrosine 24) interacts with substrate. Residues serine 106 and glutamine 127 each coordinate FMN. Tyrosine 129 contributes to the substrate binding site. An FMN-binding site is contributed by threonine 155. Arginine 164 provides a ligand contact to substrate. Residue lysine 251 coordinates FMN. The active-site Proton acceptor is histidine 275. Arginine 278 serves as a coordination point for substrate. FMN is bound at residue 306–330 (DSGIRNGLDVVRMIALGADTVLLGR).

It belongs to the FMN-dependent alpha-hydroxy acid dehydrogenase family. It depends on FMN as a cofactor.

The protein localises to the cell inner membrane. It catalyses the reaction (S)-lactate + A = pyruvate + AH2. Catalyzes the conversion of L-lactate to pyruvate. Is coupled to the respiratory chain. This Salmonella schwarzengrund (strain CVM19633) protein is L-lactate dehydrogenase.